The sequence spans 431 residues: Histidine--tRNA ligase (431 aa).

This sequence belongs to the class-II aminoacyl-tRNA synthetase family. Homodimer.

Its subcellular location is the cytoplasm. It carries out the reaction tRNA(His) + L-histidine + ATP = L-histidyl-tRNA(His) + AMP + diphosphate + H(+). The polypeptide is Histidine--tRNA ligase (hisS) (Leifsonia xyli subsp. xyli (strain CTCB07)).